The chain runs to 354 residues: Yop proteins translocation protein U (354 aa).

A disordered region spans residues 1–20 (MSGEKTEQPTPKKIRDARKK). 5 helical membrane passes run 30–50 (VSTA…DYYF), 79–99 (VLLE…LMAI), 138–158 (VEFL…WIII), 163–183 (VTLL…LGQI), and 187–207 (LMVI…AFEY).

This sequence belongs to the type III secretion exporter family.

It is found in the cell membrane. Its function is as follows. Component of the yop secretion machinery. In Yersinia pestis, this protein is Yop proteins translocation protein U (yscU).